The chain runs to 315 residues: Ribosomal RNA small subunit methyltransferase H (315 aa).

S-adenosyl-L-methionine contacts are provided by residues 61-63, D80, F108, D124, and Q131; that span reads GGH. The interval 291-315 is disordered; it reads PQPEEEEKNPRSRSAKLRFAQRKPL. Residues 301-315 show a composition bias toward basic residues; that stretch reads RSRSAKLRFAQRKPL.

The protein belongs to the methyltransferase superfamily. RsmH family.

The protein resides in the cytoplasm. It carries out the reaction cytidine(1402) in 16S rRNA + S-adenosyl-L-methionine = N(4)-methylcytidine(1402) in 16S rRNA + S-adenosyl-L-homocysteine + H(+). Its function is as follows. Specifically methylates the N4 position of cytidine in position 1402 (C1402) of 16S rRNA. This Crocosphaera subtropica (strain ATCC 51142 / BH68) (Cyanothece sp. (strain ATCC 51142)) protein is Ribosomal RNA small subunit methyltransferase H.